A 179-amino-acid chain; its full sequence is Enhancer of split m8 protein (179 aa).

The region spanning 10-65 (YQKVKKPMLERQRRARMNKCLDNLKTLVAELRGDDGILRMDKAEMLESAVIFMRQQ) is the bHLH domain. One can recognise an Orange domain in the interval 83–116 (FKNGYMNAVNEVSRVMASTPGMSVDLGKSVMTHL). The segment at 146-179 (DKAPLSPASSGYHSDCDSPAPSPQPMQQPLWRPW) is disordered. Residues 176 to 179 (WRPW) carry the WRPW motif motif.

As to quaternary structure, homodimer. Heterodimers with dpn. Transcription repression requires formation of a complex with a corepressor protein (Groucho).

It is found in the nucleus. Its function is as follows. Participates in the control of cell fate choice by uncommitted neuroectodermal cells in the embryo. Transcriptional repressor. Binds DNA on N-box motifs: 5'-CACNAG-3'. Part of the Notch signaling pathway. The sequence is that of Enhancer of split m8 protein from Drosophila melanogaster (Fruit fly).